The primary structure comprises 668 residues: tRNA 5-methylaminomethyl-2-thiouridine biosynthesis bifunctional protein MnmC (668 aa).

Residues 1 to 245 (MKHYSIQPAN…KREMLCGVME (245 aa)) form a tRNA (mnm(5)s(2)U34)-methyltransferase region. The tract at residues 270–668 (IGGGIASALL…LLKGKAVKAG (399 aa)) is FAD-dependent cmnm(5)s(2)U34 oxidoreductase.

In the N-terminal section; belongs to the methyltransferase superfamily. tRNA (mnm(5)s(2)U34)-methyltransferase family. The protein in the C-terminal section; belongs to the DAO family. Requires FAD as cofactor.

Its subcellular location is the cytoplasm. It catalyses the reaction 5-aminomethyl-2-thiouridine(34) in tRNA + S-adenosyl-L-methionine = 5-methylaminomethyl-2-thiouridine(34) in tRNA + S-adenosyl-L-homocysteine + H(+). Its function is as follows. Catalyzes the last two steps in the biosynthesis of 5-methylaminomethyl-2-thiouridine (mnm(5)s(2)U) at the wobble position (U34) in tRNA. Catalyzes the FAD-dependent demodification of cmnm(5)s(2)U34 to nm(5)s(2)U34, followed by the transfer of a methyl group from S-adenosyl-L-methionine to nm(5)s(2)U34, to form mnm(5)s(2)U34. In Escherichia coli O157:H7, this protein is tRNA 5-methylaminomethyl-2-thiouridine biosynthesis bifunctional protein MnmC.